Consider the following 387-residue polypeptide: Protein disulfide isomerase pTAC5, chloroplastic (387 aa).

The N-terminal 40 residues, 1-40 (MASSSLPLSLPFPLRSLTSTTRSLPFQCSPLFFSIPSSIV), are a transit peptide targeting the chloroplast. Coiled-coil stretches lie at residues 72–106 (EQRW…LGNS) and 143–163 (REQI…AEEK). The CR-type zinc finger occupies 318 to 387 (PVDRSESTNT…CDVCDGKKNL (70 aa)).

In terms of assembly, interacts with HSP21; the formed complex associates with the plastid-encoded RNA polymerase (PEP) complex not only during transcription initiation, but also during elongation and termination, and with a stronger efficiency in illuminated chloroplasts. Binds to promoter regions of PEP-dependent genes, especially after a heat stress. Interacts with FLN2.

It localises to the plastid. The protein resides in the chloroplast stroma. It is found in the chloroplast nucleoid. It catalyses the reaction Catalyzes the rearrangement of -S-S- bonds in proteins.. In terms of biological role, exhibits zinc-dependent disulfide isomerase activity. Required for seedling and chloroplast development under heat stress, probably by maintaining plastid-encoded RNA polymerase (PEP)-dependent transcription. The polypeptide is Protein disulfide isomerase pTAC5, chloroplastic (Arabidopsis thaliana (Mouse-ear cress)).